The primary structure comprises 219 residues: Ras-related protein Rab-32A (219 aa).

22 to 29 lines the GTP pocket; the sequence is GDIGTGKT. An Effector region motif is present at residues 44-52; that stretch reads YKSTIGVDF. GTP is bound by residues 71–75 and 134–137; these read DIAGQ and NKCD. Residues 192–219 are disordered; the sequence is NQPIEGTIQPGDLNKQPQPTSTGPSCCK. Over residues 206 to 219 the composition is skewed to polar residues; the sequence is KQPQPTSTGPSCCK. Residues C217 and C218 are each lipidated (S-geranylgeranyl cysteine).

Belongs to the small GTPase superfamily. Rab family.

This chain is Ras-related protein Rab-32A (rab32A), found in Dictyostelium discoideum (Social amoeba).